The primary structure comprises 221 residues: Ribosomal RNA small subunit methyltransferase G (221 aa).

Residues G85, L90, 138–139, and R151 contribute to the S-adenosyl-L-methionine site; that span reads AE.

The protein belongs to the methyltransferase superfamily. RNA methyltransferase RsmG family.

Its subcellular location is the cytoplasm. It catalyses the reaction guanosine(527) in 16S rRNA + S-adenosyl-L-methionine = N(7)-methylguanosine(527) in 16S rRNA + S-adenosyl-L-homocysteine. Specifically methylates the N7 position of guanine in position 527 of 16S rRNA. The polypeptide is Ribosomal RNA small subunit methyltransferase G (Caulobacter sp. (strain K31)).